The primary structure comprises 173 residues: tRNA-specific adenosine deaminase (173 aa).

Residues 9 to 121 enclose the CMP/dCMP-type deaminase domain; that stretch reads EFDEKMMRYA…DYKTGAIGSR (113 aa). H61 lines the Zn(2+) pocket. E63 (proton donor) is an active-site residue. The Zn(2+) site is built by C91 and C94.

The protein belongs to the cytidine and deoxycytidylate deaminase family. In terms of assembly, homodimer. Requires Zn(2+) as cofactor.

The catalysed reaction is adenosine(34) in tRNA + H2O + H(+) = inosine(34) in tRNA + NH4(+). Its function is as follows. Catalyzes the deamination of adenosine to inosine at the wobble position 34 of tRNA(Arg2). In Haemophilus influenzae (strain ATCC 51907 / DSM 11121 / KW20 / Rd), this protein is tRNA-specific adenosine deaminase.